Reading from the N-terminus, the 99-residue chain is Large ribosomal subunit protein bL27 (99 aa).

The propeptide occupies 1 to 9; the sequence is MLIMNLQLF.

The protein belongs to the bacterial ribosomal protein bL27 family. Post-translationally, the N-terminus is cleaved by ribosomal processing cysteine protease Prp.

This is Large ribosomal subunit protein bL27 from Clostridium beijerinckii (strain ATCC 51743 / NCIMB 8052) (Clostridium acetobutylicum).